The following is a 264-amino-acid chain: Glutamate racemase (264 aa).

Substrate is bound by residues 12-13 (DS) and 44-45 (YG). C76 acts as the Proton donor/acceptor in catalysis. 77–78 (NT) is a binding site for substrate. The active-site Proton donor/acceptor is C186. Substrate is bound at residue 187 to 188 (TH).

Belongs to the aspartate/glutamate racemases family.

The catalysed reaction is L-glutamate = D-glutamate. The protein operates within cell wall biogenesis; peptidoglycan biosynthesis. Its function is as follows. Provides the (R)-glutamate required for cell wall biosynthesis. This chain is Glutamate racemase, found in Fusobacterium nucleatum subsp. nucleatum (strain ATCC 25586 / DSM 15643 / BCRC 10681 / CIP 101130 / JCM 8532 / KCTC 2640 / LMG 13131 / VPI 4355).